The following is a 59-amino-acid chain: Large ribosomal subunit protein uL30 (59 aa).

This sequence belongs to the universal ribosomal protein uL30 family. As to quaternary structure, part of the 50S ribosomal subunit.

The sequence is that of Large ribosomal subunit protein uL30 from Psychrobacter arcticus (strain DSM 17307 / VKM B-2377 / 273-4).